The primary structure comprises 556 residues: CBS domain-containing protein CBSCBSPB3 (556 aa).

Polar residues-rich tracts occupy residues 1–20 (MSTQATGPSSTSGRRSNSTV) and 30–44 (PVQSENGSVNGNTSK). The segment at 1-63 (MSTQATGPSS…SQAPSNGERT (63 aa)) is disordered. The residue at position 2 (serine 2) is an N-acetylserine. CBS domains are found at residues 68–127 (RLSK…RPDQ), 134–189 (MTRN…RMEK), 235–294 (ITDN…LSPE), and 302–360 (MTPN…ENSS). One can recognise a PB1 domain in the interval 414 to 502 (GNSFSFKFED…KVLRLHLDFT (89 aa)). The chain crosses the membrane as a helical span at residues 527 to 549 (WVSWRGGVVVTGAVVLTSIAIVV).

Its subcellular location is the membrane. This Arabidopsis thaliana (Mouse-ear cress) protein is CBS domain-containing protein CBSCBSPB3 (CBSCBSPB3).